A 688-amino-acid chain; its full sequence is Elongation factor G (688 aa).

In terms of domain architecture, tr-type G spans 8-282 (EKTRNIGIIA…AVVDYLPAPC (275 aa)). GTP contacts are provided by residues 17 to 24 (AHIDAGKT), 81 to 85 (DTPGH), and 135 to 138 (NKMD).

Belongs to the TRAFAC class translation factor GTPase superfamily. Classic translation factor GTPase family. EF-G/EF-2 subfamily.

The protein localises to the cytoplasm. Functionally, catalyzes the GTP-dependent ribosomal translocation step during translation elongation. During this step, the ribosome changes from the pre-translocational (PRE) to the post-translocational (POST) state as the newly formed A-site-bound peptidyl-tRNA and P-site-bound deacylated tRNA move to the P and E sites, respectively. Catalyzes the coordinated movement of the two tRNA molecules, the mRNA and conformational changes in the ribosome. The chain is Elongation factor G from Aster yellows witches'-broom phytoplasma (strain AYWB).